The sequence spans 338 residues: Replication factor C small subunit (338 aa).

ATP is bound at residue 53–60 (GPPGVGKT).

This sequence belongs to the activator 1 small subunits family. RfcS subfamily. As to quaternary structure, heteromultimer composed of small subunits (RfcS) and large subunits (RfcL).

Its function is as follows. Part of the RFC clamp loader complex which loads the PCNA sliding clamp onto DNA. This Methanosarcina mazei (strain ATCC BAA-159 / DSM 3647 / Goe1 / Go1 / JCM 11833 / OCM 88) (Methanosarcina frisia) protein is Replication factor C small subunit.